The following is a 359-amino-acid chain: 3-dehydroquinate synthase (359 aa).

NAD(+) is bound by residues 71–76, 105–109, 129–130, Lys-142, and Lys-151; these read DGEQHK, GVIGD, and TT. Zn(2+) contacts are provided by Glu-184, His-247, and His-264.

This sequence belongs to the sugar phosphate cyclases superfamily. Dehydroquinate synthase family. It depends on NAD(+) as a cofactor. Co(2+) serves as cofactor. Requires Zn(2+) as cofactor.

It localises to the cytoplasm. It catalyses the reaction 7-phospho-2-dehydro-3-deoxy-D-arabino-heptonate = 3-dehydroquinate + phosphate. It participates in metabolic intermediate biosynthesis; chorismate biosynthesis; chorismate from D-erythrose 4-phosphate and phosphoenolpyruvate: step 2/7. Its function is as follows. Catalyzes the conversion of 3-deoxy-D-arabino-heptulosonate 7-phosphate (DAHP) to dehydroquinate (DHQ). The sequence is that of 3-dehydroquinate synthase from Chromobacterium violaceum (strain ATCC 12472 / DSM 30191 / JCM 1249 / CCUG 213 / NBRC 12614 / NCIMB 9131 / NCTC 9757 / MK).